A 120-amino-acid chain; its full sequence is NAD(P)H-quinone oxidoreductase subunit 3, chloroplastic (120 aa).

A run of 3 helical transmembrane segments spans residues 7 to 27 (YETF…AFLI), 64 to 84 (MFAL…PWAM), and 88 to 108 (ILGI…IVGS).

This sequence belongs to the complex I subunit 3 family. As to quaternary structure, NDH is composed of at least 16 different subunits, 5 of which are encoded in the nucleus.

It is found in the plastid. The protein localises to the chloroplast thylakoid membrane. It carries out the reaction a plastoquinone + NADH + (n+1) H(+)(in) = a plastoquinol + NAD(+) + n H(+)(out). The enzyme catalyses a plastoquinone + NADPH + (n+1) H(+)(in) = a plastoquinol + NADP(+) + n H(+)(out). NDH shuttles electrons from NAD(P)H:plastoquinone, via FMN and iron-sulfur (Fe-S) centers, to quinones in the photosynthetic chain and possibly in a chloroplast respiratory chain. The immediate electron acceptor for the enzyme in this species is believed to be plastoquinone. Couples the redox reaction to proton translocation, and thus conserves the redox energy in a proton gradient. This Cycas taitungensis (Prince sago) protein is NAD(P)H-quinone oxidoreductase subunit 3, chloroplastic.